The primary structure comprises 1687 residues: Genome polyprotein (1687 aa).

The segment covering 1–13 (MRMATPSSAPSVR) has biased composition (polar residues). The disordered stretch occupies residues 1-56 (MRMATPSSAPSVRNTEKRKNKKASSKASVSFGAPSPLSSESEDEINYMTPPEQEAQ). The interaction with host MAP1LC3A/LC3 stretch occupies residues 1 to 116 (MRMATPSSAP…FRRYPHLRPK (116 aa)). An interaction with NTPase region spans residues 117 to 341 (EDRPDAPSHA…ISIFGEWQAE (225 aa)). Residues 244-341 (SPVQDWNVDP…ISIFGEWQAE (98 aa)) are interaction with NS4. 2 host ER membrane association regions span residues 261 to 292 (KLRM…KPLN) and 302 to 341 (WTFS…WQAE). The interaction with NS1-2, NS4 and homooligomerization stretch occupies residues 342–518 (GPFDLALDVV…GKTCFCQNLA (177 aa)). Residues 476–641 (RISMARAAFE…DDARARAPGD (166 aa)) form the SF3 helicase domain. 504–511 (GRPGIGKT) contributes to the ATP binding site. Positions 595 to 700 (VIIITTNQQT…AVALVHERHD (106 aa)) are important for mitochondrion targeting. Positions 893–898 (DEEYDE) are acidic. Tyr-896 carries the post-translational modification O-(5'-phospho-RNA)-tyrosine. An interaction with host EIF4G region spans residues 978 to 994 (WADDDRQVDYGEKINFE). Positions 995–1172 (APVSIWSRVV…AATHGEPTLE (178 aa)) constitute a Peptidase C37 domain. Residues His-1024, Asp-1048, and Cys-1133 each act as for 3CLpro activity in the active site. Residues 1416–1537 (RYHMDADYTR…STNLELDMVK (122 aa)) enclose the RdRp catalytic domain. Positions 1420 and 1422 each coordinate Mg(2+). A disulfide bridge connects residues Cys-1482 and Cys-1484. Mg(2+)-binding residues include Asp-1524, Glu-1525, and Ser-1569.

As to quaternary structure, homodimer. Interacts with NTPase; this interaction increases the proapoptotic activity of the NTPase and is crucial for the formation of the viral replication complex. Interacts with NS4; this interaction is crucial for the formation of the viral replication complex. Interacts (via N-terminus) with host VAPA. Interacts with host VAPB. In terms of assembly, monomer. Homooligomer. Interacts with NS1-2; this interaction increases the proapoptotic activity of the NTPase and is crucial for the formation of the viral replication complex. Interacts with NS4; this interaction increases the proapoptotic activity of the NTPase. Interacts with host G3BP1; this interaction leads to the redistribution of G3BP1 and its cellular partners to the viral replication complexes, thereby preventing the assembly of stress granules. As to quaternary structure, homodimer. Monomer; in solution. In terms of assembly, interacts with NTPase; this interaction increases the proapoptotic activity of the NTPase. Interacts with NS1-2; this interaction is crucial for the formation of the viral replication complex. Monomer. Interacts with the RNA-directed RNA polymerase; this interaction induces the multimerization of the RdRp and enhances its activity. Interacts with host IEF4E; this interaction plays a role in translation of viral proteins. Interacts (via C-terminus) with host IEF4G1 (via central domain); this interaction plays a role in translation of viral proteins. As to quaternary structure, homohexamer; also forms fibrous hexameric oligomer. Interacts with the viral genome-linked protein; this interaction induces the multimerization of the RdRp and enhances its activity. Requires Mg(2+) as cofactor. It depends on Mn(2+) as a cofactor. Post-translationally, specific enzymatic cleavages in vivo yield mature proteins. 3CLpro is first autocatalytically cleaved, then processes the whole polyprotein. In terms of processing, cleaved by host CASP3/caspase 3 at 18-22 h.p.i. The cleavage allows NS1 secretion, which is essential for intestinal infection and resistance to IFN-lambda. VPg is uridylylated by the polymerase and is covalently attached to the 5'-end of the polyadenylated genomic and subgenomic RNAs. This uridylylated form acts as a nucleotide-peptide primer for the polymerase.

The protein localises to the host endoplasmic reticulum membrane. It localises to the secreted. Its subcellular location is the host endosome membrane. The protein resides in the host mitochondrion. It is found in the host cytoplasm. The protein localises to the host perinuclear region. The enzyme catalyses a ribonucleoside 5'-triphosphate + H2O = a ribonucleoside 5'-diphosphate + phosphate + H(+). It carries out the reaction Endopeptidase with a preference for cleavage when the P1 position is occupied by Glu-|-Xaa and the P1' position is occupied by Gly-|-Yaa.. It catalyses the reaction RNA(n) + a ribonucleoside 5'-triphosphate = RNA(n+1) + diphosphate. Inhibited by Suramin, Suramin-related compounds and NF023. Inhibited by PPNDS. Induces the proliferation of the host smooth ER membranes forming long tubular structures. These remodeled membranes probably form the viral factories that contain the replication complex. May play a role in viral replication by interacting with host VAPA, a vesicle-associated membrane protein that plays a role in SNARE-mediated vesicle fusion. This interaction may target replication complex to intracellular membranes. In terms of biological role, promotes intestinal tropism and persistent fecal shedding in strain CR6. This function requires Glu-94 and is present in persistant strains. Functionally, displays NTPase activity, but probably no helicase activity. Displays RNA chaperone-like activity and destabilizes dsRNA. Induces the formation of convoluted membranes derived from the host ER. These remodeled membranes probably form the viral factories that contain the replication complex. Initiates host cell death by targeting the mitochondrial outer membrane, leading to the permeabilization of mitochondria, programmed host cell death and viral egress. Externalization of host cardiolipin seems to be involved in the process. Probably plays a role in preventing the assembly of host stress granules. Its function is as follows. Probable key protein responsible for the formation of membrane alterations by the virus. Induces the formation of convoluted membranes derived from the host ER. These remodeled membranes probably form the viral factories that contain the replication complex. May play a role in targeting replication complex to intracellular membranes. Viral genome-linked protein is covalently linked to the 5'-end of the positive-strand, negative-strand genomic RNAs and subgenomic RNA. Acts as a genome-linked replication primer. May recruit ribosome to viral RNA thereby promoting viral proteins translation. Interacts with host translation initiation complex to allow the translation of viral proteins. Induces the formation of aggregates of RNA-directed RNA polymerase in the presence of RNA. Through its interaction with the viral RNA-directed RNA polymerase, plays a crucial role in enhancing the polymerase activity. In terms of biological role, processes the polyprotein. 3CLpro-RdRp is first released by autocleavage, then all other proteins are cleaved. May cleave host polyadenylate-binding protein thereby inhibiting cellular translation. Does not cleave host G3BP1. Functionally, replicates genomic and antigenomic RNA by recognizing replications specific signals. Also transcribes a subgenomic mRNA by initiating RNA synthesis internally on antigenomic RNA. This sgRNA codes for structural proteins. Catalyzes the covalent attachment VPg with viral RNAs. In Norovirus (isolate Mouse/NoV/United States/MNV1/2002/GV) (MNV-1), this protein is Genome polyprotein.